Consider the following 517-residue polypeptide: Protein disulfide-isomerase EUG1 (517 aa).

Positions Met-1–Ala-29 are cleaved as a signal peptide. Residues Thr-30 to Glu-141 enclose the Thioredoxin 1 domain. Residues Asn-159, Asn-174, Asn-207, Asn-293, and Asn-462 are each glycosylated (N-linked (GlcNAc...) asparagine). A Thioredoxin 2 domain is found at Tyr-355–Thr-487. The Prevents secretion from ER signature appears at His-514–Leu-517.

Belongs to the protein disulfide isomerase family. In terms of assembly, interacts with EPS1. In terms of processing, may have O-linked mannose residues.

Its subcellular location is the endoplasmic reticulum lumen. It carries out the reaction Catalyzes the rearrangement of -S-S- bonds in proteins.. In terms of biological role, probably interacts with nascent polypeptides in the endoplasmic reticulum. It is an essential gene only in the absence of PDI. Its native disulfide isomerase activity is very low. The sequence is that of Protein disulfide-isomerase EUG1 (EUG1) from Saccharomyces cerevisiae (strain ATCC 204508 / S288c) (Baker's yeast).